The primary structure comprises 108 residues: Nucleoid-associated protein GWCH70_0020 (108 aa).

Residues 1-34 are disordered; that stretch reads MMRGGMGNMQKMMKQMQKMQKEMQKAQEQLAEKT. Residues 9-18 are compositionally biased toward low complexity; it reads MQKMMKQMQK. Positions 19–34 are enriched in basic and acidic residues; sequence MQKEMQKAQEQLAEKT.

Belongs to the YbaB/EbfC family. Homodimer.

Its subcellular location is the cytoplasm. It is found in the nucleoid. Binds to DNA and alters its conformation. May be involved in regulation of gene expression, nucleoid organization and DNA protection. This Geobacillus sp. (strain WCH70) protein is Nucleoid-associated protein GWCH70_0020.